The following is a 771-amino-acid chain: Probable dipeptidyl peptidase 4 (771 aa).

Residues 1–16 (MKYSKLLLLLVSVVQA) form the signal peptide. Residues Asn-37, Asn-80, Asn-114, Asn-173, Asn-222, Asn-470, and Asn-495 are each glycosylated (N-linked (GlcNAc...) asparagine). Active-site charge relay system residues include Ser-618, Asp-695, and His-730.

The protein belongs to the peptidase S9B family.

Its subcellular location is the secreted. The enzyme catalyses Release of an N-terminal dipeptide, Xaa-Yaa-|-Zaa-, from a polypeptide, preferentially when Yaa is Pro, provided Zaa is neither Pro nor hydroxyproline.. In terms of biological role, extracellular dipeptidyl-peptidase which removes N-terminal dipeptides sequentially from polypeptides having unsubstituted N-termini provided that the penultimate residue is proline. This Aspergillus flavus (strain ATCC 200026 / FGSC A1120 / IAM 13836 / NRRL 3357 / JCM 12722 / SRRC 167) protein is Probable dipeptidyl peptidase 4 (dpp4).